A 163-amino-acid chain; its full sequence is Small ribosomal subunit protein uS9 (163 aa).

The disordered stretch occupies residues 1–41 (MAENTNDSAVLETEEELTSYTTETNAGAGTGTSTIAPGYGT). The segment covering 18–38 (TSYTTETNAGAGTGTSTIAPG) has biased composition (low complexity).

This sequence belongs to the universal ribosomal protein uS9 family.

This is Small ribosomal subunit protein uS9 from Bifidobacterium adolescentis (strain ATCC 15703 / DSM 20083 / NCTC 11814 / E194a).